The primary structure comprises 111 residues: PCNA-associated factor (111 aa).

The segment covering 1–10 (MVRTKANSVP) has biased composition (polar residues). The interval 1-111 (MVRTKANSVP…PPDHTDDEKE (111 aa)) is disordered. Position 8 is a phosphoserine (serine 8). Lysine 15 is covalently cross-linked (Glycyl lysine isopeptide (Lys-Gly) (interchain with G-Cter in ubiquitin)). The D-box signature appears at 23 to 34 (RKVLGSSTSAAN). N6-acetyllysine; alternate is present on lysine 24. Residue lysine 24 forms a Glycyl lysine isopeptide (Lys-Gly) (interchain with G-Cter in ubiquitin); alternate linkage. The segment covering 27 to 39 (GSSTSAANSTPLS) has biased composition (polar residues). A phosphoserine mark is found at serine 28, serine 31, and serine 72. A PIP-box motif is present at residues 62–72 (QKGIGEFFSLS). The segment covering 74 to 84 (KDSEKENRIPE) has biased composition (basic and acidic residues). Residues 78–80 (KEN) carry the KEN box motif. An Initiation motif motif is present at residues 85–97 (EAGSSGLGKAKRK).

In terms of assembly, interacts (when monoubiquitinated at Lys-15 and Lys-24) with PCNA. Interacts with isoform 2/p33ING1b of ING1. Interacts with BRCA1. Post-translationally, monoubiquitinated at Lys-15 and Lys-24 during normal S phase, promoting its association with PCNA. Also diubiquitinated at these 2 sites. Following DNA damage, monoubiquitin chains at Lys-15 and Lys-24 are probably extended, leading to disrupt the interaction with PCNA. Polyubiquitinated by the APC/C complex at the mitotic exit, leading to its degradation by the proteasome.

It localises to the nucleus. Its subcellular location is the cytoplasm. It is found in the perinuclear region. Functionally, PCNA-binding protein that acts as a regulator of DNA repair during DNA replication. Following DNA damage, the interaction with PCNA is disrupted, facilitating the interaction between monoubiquitinated PCNA and the translesion DNA synthesis DNA polymerase eta (POLH) at stalled replisomes, facilitating the bypass of replication-fork-blocking lesions. Also acts as a regulator of centrosome number. This Bos taurus (Bovine) protein is PCNA-associated factor.